A 417-amino-acid polypeptide reads, in one-letter code: uncharacterized protein (417 aa).

Residues 10-30 form a helical membrane-spanning segment; that stretch reads ALVCFSILSILVLACGCVNTP. The interval 84 to 106 is disordered; that stretch reads QENHPLQSNQNYEQTNGNFNEEN. A compositionally biased stretch (polar residues) spans 86–106; sequence NHPLQSNQNYEQTNGNFNEEN. A helical transmembrane segment spans residues 148-168; the sequence is LYYIKVIDPIVGGLAGIDIYV.

It localises to the cell membrane. This is an uncharacterized protein from Methanocaldococcus jannaschii (strain ATCC 43067 / DSM 2661 / JAL-1 / JCM 10045 / NBRC 100440) (Methanococcus jannaschii).